The chain runs to 459 residues: Glutathione reductase (459 aa).

The FAD site is built by Ser14, Gly15, Glu34, Thr41, Cys42, Lys50, and Ala114. Ser14 contributes to the glutathione binding site. The cysteines at positions 42 and 47 are disulfide-linked. NADP(+) contacts are provided by Ile177, Glu180, Arg197, Lys203, and Gly262. Positions 313 and 321 each coordinate FAD. Residue Arg329 coordinates glutathione. Ala351 provides a ligand contact to NADP(+). His448 is a binding site for FAD. His448 (proton acceptor) is an active-site residue.

It belongs to the class-I pyridine nucleotide-disulfide oxidoreductase family. In terms of assembly, homodimer. FAD serves as cofactor.

The protein resides in the cytoplasm. It catalyses the reaction 2 glutathione + NADP(+) = glutathione disulfide + NADPH + H(+). Functionally, catalyzes the reduction of glutathione disulfide (GSSG) to reduced glutathione (GSH). Constitutes the major mechanism to maintain a high GSH:GSSG ratio in the cytosol. This Nostoc sp. (strain PCC 7120 / SAG 25.82 / UTEX 2576) protein is Glutathione reductase (gor).